Here is a 249-residue protein sequence, read N- to C-terminus: 5'-nucleotidase SurE (249 aa).

A divalent metal cation-binding residues include Asp-8, Asp-9, Ser-39, and Asn-96.

This sequence belongs to the SurE nucleotidase family. The cofactor is a divalent metal cation.

The protein resides in the cytoplasm. The enzyme catalyses a ribonucleoside 5'-phosphate + H2O = a ribonucleoside + phosphate. Functionally, nucleotidase that shows phosphatase activity on nucleoside 5'-monophosphates. The sequence is that of 5'-nucleotidase SurE from Clostridium tetani (strain Massachusetts / E88).